The chain runs to 215 residues: Uracil phosphoribosyltransferase (215 aa).

5-phospho-alpha-D-ribose 1-diphosphate is bound by residues Arg77, Arg102, and 129–137 (DPMLATGGS). Uracil-binding positions include Ile193 and 198-200 (GDA). Asp199 serves as a coordination point for 5-phospho-alpha-D-ribose 1-diphosphate.

It belongs to the UPRTase family. The cofactor is Mg(2+).

The catalysed reaction is UMP + diphosphate = 5-phospho-alpha-D-ribose 1-diphosphate + uracil. It participates in pyrimidine metabolism; UMP biosynthesis via salvage pathway; UMP from uracil: step 1/1. Its activity is regulated as follows. Allosterically activated by GTP. Functionally, catalyzes the conversion of uracil and 5-phospho-alpha-D-ribose 1-diphosphate (PRPP) to UMP and diphosphate. This is Uracil phosphoribosyltransferase from Corynebacterium urealyticum (strain ATCC 43042 / DSM 7109).